The sequence spans 511 residues: L-arabinose isomerase (511 aa).

Positions 316, 343, 360, and 459 each coordinate Mn(2+).

Belongs to the arabinose isomerase family. Requires Mn(2+) as cofactor.

It carries out the reaction beta-L-arabinopyranose = L-ribulose. It functions in the pathway carbohydrate degradation; L-arabinose degradation via L-ribulose; D-xylulose 5-phosphate from L-arabinose (bacterial route): step 1/3. Functionally, catalyzes the conversion of L-arabinose to L-ribulose. The chain is L-arabinose isomerase from Arthrobacter sp. (strain FB24).